Here is a 106-residue protein sequence, read N- to C-terminus: DNA-directed RNA polymerase subunit omega (106 aa).

The segment at 76–106 (REPAREAAEPAGEAPEEQQRAAGEREDQGAA) is disordered. The segment covering 92–106 (EQQRAAGEREDQGAA) has biased composition (basic and acidic residues).

This sequence belongs to the RNA polymerase subunit omega family. In terms of assembly, the RNAP catalytic core consists of 2 alpha, 1 beta, 1 beta' and 1 omega subunit. When a sigma factor is associated with the core the holoenzyme is formed, which can initiate transcription.

It catalyses the reaction RNA(n) + a ribonucleoside 5'-triphosphate = RNA(n+1) + diphosphate. Its function is as follows. Promotes RNA polymerase assembly. Latches the N- and C-terminal regions of the beta' subunit thereby facilitating its interaction with the beta and alpha subunits. The chain is DNA-directed RNA polymerase subunit omega from Rubrobacter xylanophilus (strain DSM 9941 / JCM 11954 / NBRC 16129 / PRD-1).